The following is a 178-amino-acid chain: Large ribosomal subunit protein uL5 (178 aa).

The protein belongs to the universal ribosomal protein uL5 family. In terms of assembly, part of the 50S ribosomal subunit; part of the 5S rRNA/L5/L18/L25 subcomplex. Contacts the 5S rRNA and the P site tRNA. Forms a bridge to the 30S subunit in the 70S ribosome.

This is one of the proteins that bind and probably mediate the attachment of the 5S RNA into the large ribosomal subunit, where it forms part of the central protuberance. In the 70S ribosome it contacts protein S13 of the 30S subunit (bridge B1b), connecting the 2 subunits; this bridge is implicated in subunit movement. Contacts the P site tRNA; the 5S rRNA and some of its associated proteins might help stabilize positioning of ribosome-bound tRNAs. The sequence is that of Large ribosomal subunit protein uL5 from Acinetobacter baumannii (strain AB0057).